Here is a 449-residue protein sequence, read N- to C-terminus: MLSSQTSSIFTVSRLNQTVRLLLEQEMGQVWISGEISNFTQPASGHWYFTLKDDTAQVRCAMFRNSNRRVTFRPQHGQQVLVRANITLYEPRGDYQIIAESMQPAGEGLLQQKYEQLKAKLHAEGLFDQQHKQPLPSPAHCVGVITSKTGAALHDILHVLKRRDPSLPVIIYPTAVQGDDAPGQIVRAIELANARGECDVLIVGRGGGSLEDLWSFNDERVARAIFASRIPVVSAVGHETDVTIADFVADLRAPTPSAAAEIVSRNQQELLRQIQSAQQRLGMAMDYYLANRSRRFTQIFHRLQQQHPQLRLARQQTALERLRQRMGFALEARIKQANQRQQRVSQRLSQQNPQPRIHRAQSRIQQLEYRLTENIRSRLSEQRERFGNAVTHLEAVSPLATLARGYTVSTTTDGKVLKKIKQVKAGDIMTTRLEDGWLESEVKSVTPGT.

Belongs to the XseA family. As to quaternary structure, heterooligomer composed of large and small subunits.

Its subcellular location is the cytoplasm. It carries out the reaction Exonucleolytic cleavage in either 5'- to 3'- or 3'- to 5'-direction to yield nucleoside 5'-phosphates.. Functionally, bidirectionally degrades single-stranded DNA into large acid-insoluble oligonucleotides, which are then degraded further into small acid-soluble oligonucleotides. This chain is Exodeoxyribonuclease 7 large subunit, found in Salmonella heidelberg (strain SL476).